A 665-amino-acid polypeptide reads, in one-letter code: Mitochondrial Rho GTPase 1 (665 aa).

At 1–634 (MTNDVIRIVV…NQDPEEETNT (634 aa)) the chain is on the cytoplasmic side. Residues 3–177 (NDVIRIVVCG…FYLCQKAVMH (175 aa)) enclose the Miro 1 domain. Residues 12–19 (GDEGVGKS), 61–67 (DTQFSNS), and 119–122 (NVFD) contribute to the GTP site. EF-hand domains follow at residues 193-228 (NAVA…CFGR) and 313-348 (EGYR…TPGI). Ca(2+) is bound by residues Asp206, Asp208, Asp210, Tyr212, Glu217, Asp326, Asp328, Asp330, and Glu337. Residues 452 to 618 (RSVFNCFVLG…FIQLAEAAQQ (167 aa)) enclose the Miro 2 domain. GTP-binding positions include 461 to 468 (GSHMSGKT), 498 to 502 (EMTGG), and 567 to 570 (LKAD). The helical; Anchor for type IV membrane protein transmembrane segment at 635–655 (IMPFALAGGATVLLAAAVAWI) threads the bilayer. The Mitochondrial intermembrane segment spans residues 656–665 (FKNVRVAGRE).

It belongs to the mitochondrial Rho GTPase family.

The protein resides in the mitochondrion outer membrane. Functionally, mitochondrial GTPase involved in mitochondrial trafficking. Probably involved in control of anterograde transport of mitochondria and their subcellular distribution. This Yarrowia lipolytica (strain CLIB 122 / E 150) (Yeast) protein is Mitochondrial Rho GTPase 1 (GEM1).